We begin with the raw amino-acid sequence, 100 residues long: Co-chaperonin GroES (100 aa).

It belongs to the GroES chaperonin family. In terms of assembly, heptamer of 7 subunits arranged in a ring. Interacts with the chaperonin GroEL.

The protein resides in the cytoplasm. Its function is as follows. Together with the chaperonin GroEL, plays an essential role in assisting protein folding. The GroEL-GroES system forms a nano-cage that allows encapsulation of the non-native substrate proteins and provides a physical environment optimized to promote and accelerate protein folding. GroES binds to the apical surface of the GroEL ring, thereby capping the opening of the GroEL channel. In Mycolicibacterium paratuberculosis (strain ATCC BAA-968 / K-10) (Mycobacterium paratuberculosis), this protein is Co-chaperonin GroES.